A 292-amino-acid polypeptide reads, in one-letter code: Ribosomal protein L11 methyltransferase (292 aa).

Positions 136, 159, 181, and 228 each coordinate S-adenosyl-L-methionine.

This sequence belongs to the methyltransferase superfamily. PrmA family.

It localises to the cytoplasm. It catalyses the reaction L-lysyl-[protein] + 3 S-adenosyl-L-methionine = N(6),N(6),N(6)-trimethyl-L-lysyl-[protein] + 3 S-adenosyl-L-homocysteine + 3 H(+). Functionally, methylates ribosomal protein L11. In Rhizobium johnstonii (strain DSM 114642 / LMG 32736 / 3841) (Rhizobium leguminosarum bv. viciae), this protein is Ribosomal protein L11 methyltransferase.